The chain runs to 78 residues: Large ribosomal subunit protein bL28 (78 aa).

The tract at residues 1–21 (MSRVCQVTGKKPMVGNNRSHA) is disordered.

This sequence belongs to the bacterial ribosomal protein bL28 family.

The polypeptide is Large ribosomal subunit protein bL28 (Shewanella woodyi (strain ATCC 51908 / MS32)).